The following is a 395-amino-acid chain: Protein NDRG1 (395 aa).

The interval 325–395 is disordered; the sequence is RSRTGSAASS…NTPKSMEISC (71 aa). Residues 326-339 are compositionally biased toward low complexity; sequence SRTGSAASSSSQDG. 4 tandem repeats follow at residues 339 to 348, 349 to 358, 359 to 368, and 369 to 378. The 4 X 10 AA tandem repeats of G-[NS]-R-S-R-[AS]-H-T-[DGN]-[DES] stretch occupies residues 339-378; the sequence is GNRSRSHTNEGSRSRSHTGDGNRSRAHTGDGNRSRSHTDS. Residues 345–376 show a composition bias toward basic and acidic residues; it reads HTNEGSRSRSHTGDGNRSRAHTGDGNRSRSHT. The span at 377–389 shows a compositional bias: polar residues; it reads DSNNTNSEHNTPK.

The protein belongs to the NDRG family.

May be involved in pronephros development, after specification of the pronephros. The sequence is that of Protein NDRG1 from Xenopus tropicalis (Western clawed frog).